Here is a 443-residue protein sequence, read N- to C-terminus: MDPLNLSWYDDDLERQNWSRPFNGSDGKADRPHYNYYATLLTLLIAVIVFGNVLVCMAVSREKALQTTTNYLIVSLAVADLLVATLVMPWVVYLEVVGEWKFSRIHCDIFVTLDVMMCTASILNLCAISIDRYTAVAMPMLYNTRYSSKRRVTVMISIVWVLSFTISCPLLFGLNNADQNECIIANPAFVVYSSIVSFYVPFIVTLLVYIKIYIVLRRRRKRVNTKRSSRAFRAHLRAPLKGNCTHPEDMKLCTVIMKSNGSFPVNRRRVEAARRAQELEMEMLSSTSPPERTRYSPIPPSHHQLTLPDPSHHGLHSTPDSPAKPEKNGHAKDHPKIAKIFEIQTMPNGKTRTSLKTMSRRKLSQQKEKKATQMLAIVLGVFIICWLPFFITHILNIHCDCNIPPVLYSAFTWLGYVNSAVNPIIYTTFNIEFRKAFLKILHC.

Residues 1–37 (MDPLNLSWYDDDLERQNWSRPFNGSDGKADRPHYNYY) are Extracellular-facing. Residues Asn-5, Asn-17, and Asn-23 are each glycosylated (N-linked (GlcNAc...) asparagine). Residues 38 to 60 (ATLLTLLIAVIVFGNVLVCMAVS) form a helical membrane-spanning segment. The Cytoplasmic segment spans residues 61–70 (REKALQTTTN). Residues 71–93 (YLIVSLAVADLLVATLVMPWVVY) traverse the membrane as a helical segment. Residues 94–108 (LEVVGEWKFSRIHCD) are Extracellular-facing. An intrachain disulfide couples Cys-107 to Cys-182. Residues 109–130 (IFVTLDVMMCTASILNLCAISI) form a helical membrane-spanning segment. Residues 131–151 (DRYTAVAMPMLYNTRYSSKRR) are Cytoplasmic-facing. The helical transmembrane segment at 152-172 (VTVMISIVWVLSFTISCPLLF) threads the bilayer. At 173–188 (GLNNADQNECIIANPA) the chain is on the extracellular side. The helical transmembrane segment at 189–213 (FVVYSSIVSFYVPFIVTLLVYIKIY) threads the bilayer. The interval 211-373 (KIYIVLRRRR…SQQKEKKATQ (163 aa)) is interaction with PPP1R9B. Topologically, residues 214–373 (IVLRRRRKRV…SQQKEKKATQ (160 aa)) are cytoplasmic. A disordered region spans residues 281–332 (MEMLSSTSPPERTRYSPIPPSHHQLTLPDPSHHGLHSTPDSPAKPEKNGHAK). The segment covering 323-332 (AKPEKNGHAK) has biased composition (basic and acidic residues). A helical transmembrane segment spans residues 374–395 (MLAIVLGVFIICWLPFFITHIL). Residues 396 to 409 (NIHCDCNIPPVLYS) lie on the Extracellular side of the membrane. A disulfide bridge connects residues Cys-399 and Cys-401. A helical membrane pass occupies residues 410–431 (AFTWLGYVNSAVNPIIYTTFNI). Residues 432–443 (EFRKAFLKILHC) are Cytoplasmic-facing. Cys-443 carries S-palmitoyl cysteine lipidation.

This sequence belongs to the G-protein coupled receptor 1 family. Forms homo- and heterooligomers with DRD4. The interaction with DRD4 may modulate agonist-induced downstream signaling. Interacts with CADPS and CADPS2. Interacts with GPRASP1, PPP1R9B and CLIC6. Interacts with ARRB2. Interacts with HTR2A. Interacts with GNAI2 isoform sGi2, the interaction allows the creation of an intracellular pool of DRD2 that can be released to cell surface upon agonist stimulation. Interacts with DRD1. Interacts with KCNA2. In terms of processing, palmitoylated. Palmitoylation which is required for proper localization to the plasma membrane and stability of the receptor could be carried on by ZDHHC4, ZDHHC3 and ZDHHC8. As to expression, expressed in the anterior pituitary gland.

The protein resides in the cell membrane. It localises to the golgi apparatus membrane. Its function is as follows. Dopamine receptor whose activity is mediated by G proteins which inhibit adenylyl cyclase. Positively regulates postnatal regression of retinal hyaloid vessels via suppression of VEGFR2/KDR activity, downstream of OPN5. The polypeptide is D(2) dopamine receptor (DRD2) (Homo sapiens (Human)).